Consider the following 182-residue polypeptide: Adenine phosphoribosyltransferase (182 aa).

The protein belongs to the purine/pyrimidine phosphoribosyltransferase family. Homodimer.

The protein resides in the cytoplasm. It catalyses the reaction AMP + diphosphate = 5-phospho-alpha-D-ribose 1-diphosphate + adenine. It participates in purine metabolism; AMP biosynthesis via salvage pathway; AMP from adenine: step 1/1. Its function is as follows. Catalyzes a salvage reaction resulting in the formation of AMP, that is energically less costly than de novo synthesis. The polypeptide is Adenine phosphoribosyltransferase (Campylobacter jejuni subsp. jejuni serotype O:2 (strain ATCC 700819 / NCTC 11168)).